The following is a 179-amino-acid chain: ATP synthase subunit delta (179 aa).

It belongs to the ATPase delta chain family. In terms of assembly, F-type ATPases have 2 components, F(1) - the catalytic core - and F(0) - the membrane proton channel. F(1) has five subunits: alpha(3), beta(3), gamma(1), delta(1), epsilon(1). F(0) has three main subunits: a(1), b(2) and c(10-14). The alpha and beta chains form an alternating ring which encloses part of the gamma chain. F(1) is attached to F(0) by a central stalk formed by the gamma and epsilon chains, while a peripheral stalk is formed by the delta and b chains.

The protein localises to the cell membrane. Its function is as follows. F(1)F(0) ATP synthase produces ATP from ADP in the presence of a proton or sodium gradient. F-type ATPases consist of two structural domains, F(1) containing the extramembraneous catalytic core and F(0) containing the membrane proton channel, linked together by a central stalk and a peripheral stalk. During catalysis, ATP synthesis in the catalytic domain of F(1) is coupled via a rotary mechanism of the central stalk subunits to proton translocation. In terms of biological role, this protein is part of the stalk that links CF(0) to CF(1). It either transmits conformational changes from CF(0) to CF(1) or is implicated in proton conduction. This is ATP synthase subunit delta from Staphylococcus aureus (strain Mu50 / ATCC 700699).